The sequence spans 283 residues: Glutamate racemase (283 aa).

Residues 7 to 8 and 39 to 40 each bind substrate; these read DS and YG. The active-site Proton donor/acceptor is the Cys70. Residue 71–72 participates in substrate binding; sequence NT. The active-site Proton donor/acceptor is the Cys206. Substrate is bound at residue 207-208; the sequence is TH.

Belongs to the aspartate/glutamate racemases family.

It carries out the reaction L-glutamate = D-glutamate. The protein operates within cell wall biogenesis; peptidoglycan biosynthesis. In terms of biological role, provides the (R)-glutamate required for cell wall biosynthesis. The polypeptide is Glutamate racemase (Caulobacter sp. (strain K31)).